We begin with the raw amino-acid sequence, 671 residues long: MSAEHVEEVVSEEPFLGTLDIALLVVLLVGATWYFMRSRKKEEAPIRSYSIQPTTVSTVSTTENSFIKKLKASGRSLVVFYGSQTGTAEEFAGRLAKEGLRYRMKGMVADPEECDMEELLQMKDIPNSLAVFCLATYGEGDPTDNAMEFYEWITNGEVDLTGLNYAVFGLGNKTYEHYNKVAIYVDKRLEELGATRVFELGLGDDDANIEDDFITWKDRFWPSVCDFFGIEGSGEEVLMRQFRLLEQPDVQPDRIYTGEIARLHSMQNQRPPFDAKNPFLASVIVNRELHKGGGRSCMHIELDIDGSKMRYDAGDHIAMYPINDKILVEKLGKLCDANLDTVFSLINTDTDSSKKHPFPCPTTYRTALTHYLEITAIPRTHILKELAEYCSDEKDKEFLRNMASITPEGKEKYQNWIQNSSRNIVHILEDIKSCRPPIDHICELLPRLQPRYYSISSSSKLYPTNVHITAVLVQYETPTGRVNKGVATSYMKEKNPSVGEVKVPVFIRKSQFRLPTKSEIPIIMVGPGTGLAPFRGFIQERQFLRDGGKVVGDTILYFGCRKKDEDFIYREELEQYVQNGTLTLKTAFSRDQQEKIYVTHLIEQDADLIWKVIGEQKGHFYICGDAKNMAVDVRNILVKILSTKGNMNESDAVQYIKKMEAQKRYSADVWS.

The Lumenal segment spans residues 1-14; sequence MSAEHVEEVVSEEP. The chain crosses the membrane as a helical span at residues 15 to 35; it reads FLGTLDIALLVVLLVGATWYF. Over 36–671 the chain is Cytoplasmic; sequence MRSRKKEEAP…QKRYSADVWS (636 aa). The Flavodoxin-like domain maps to 77–221; sequence LVVFYGSQTG…DFITWKDRFW (145 aa). Residues 83 to 88, 135 to 138, 170 to 179, and Asp-205 contribute to the FMN site; these read SQTGTA, ATYG, and LGNKTYEHYN. Positions 276–515 constitute an FAD-binding FR-type domain; sequence KNPFLASVIV…FIRKSQFRLP (240 aa). Arg-295 is an NADP(+) binding site. FAD-binding positions include 451–454, 469–471, Tyr-475, and 485–488; these read RYYS, TAV, and GVAT. NADP(+) is bound by residues Thr-529, 589–590, 595–599, and Asp-632; these read SR and KIYVT. Trp-670 is an FAD binding site.

It belongs to the NADPH--cytochrome P450 reductase family. This sequence in the N-terminal section; belongs to the flavodoxin family. The protein in the C-terminal section; belongs to the flavoprotein pyridine nucleotide cytochrome reductase family. The cofactor is FAD. FMN is required as a cofactor.

It localises to the endoplasmic reticulum membrane. The catalysed reaction is 2 oxidized [cytochrome P450] + NADPH = 2 reduced [cytochrome P450] + NADP(+) + H(+). In terms of biological role, this enzyme is required for electron transfer from NADP to cytochrome P450 in microsomes. It can also provide electron transfer to heme oxygenase and cytochrome B5. In Musca domestica (House fly), this protein is NADPH--cytochrome P450 reductase.